The sequence spans 122 residues: Biogenesis of lysosome-related organelles complex 1 subunit CNL1 (122 aa).

Positions M1–E10 are enriched in basic and acidic residues. The segment at M1–I21 is disordered. The stretch at E63–I95 forms a coiled coil.

Belongs to the BLOC1S4 family. Component of the biogenesis of lysosome-related organelles complex-1 (BLOC-1) composed of at least BLI1, BLS1, CNL1, KXD1, SNN1 and VAB2.

The protein localises to the cytoplasm. Functionally, component of the biogenesis of lysosome-related organelles complex-1 (BLOC-1), a complex that is involved in endosomal cargo sorting. The chain is Biogenesis of lysosome-related organelles complex 1 subunit CNL1 (CLN1) from Saccharomyces cerevisiae (strain Lalvin QA23) (Baker's yeast).